A 100-amino-acid polypeptide reads, in one-letter code: Small ribosomal subunit protein uS14c (100 aa).

Residues 1–31 form a disordered region; the sequence is MAKKSLIQREKKRQKLEQKYHSIRRSSKKEI.

The protein belongs to the universal ribosomal protein uS14 family. As to quaternary structure, part of the 30S ribosomal subunit.

The protein resides in the plastid. Its subcellular location is the chloroplast. Functionally, binds 16S rRNA, required for the assembly of 30S particles. The polypeptide is Small ribosomal subunit protein uS14c (Atropa belladonna (Belladonna)).